A 371-amino-acid polypeptide reads, in one-letter code: Glycosyltransferase 8 domain-containing protein 1 (371 aa).

Residues 1–7 (MSFRKVH) lie on the Cytoplasmic side of the membrane. Residues 8–28 (IAIILLAAVVFLLILHHNILG) form a helical; Signal-anchor for type II membrane protein membrane-spanning segment. Residues 29-371 (LTDILTRQSS…RRHGEADGTK (343 aa)) are Lumenal-facing. N-linked (GlcNAc...) asparagine glycosylation is found at Asn104, Asn249, and Asn257.

This sequence belongs to the glycosyltransferase 8 family.

It is found in the membrane. This is Glycosyltransferase 8 domain-containing protein 1 (glt8d1) from Xenopus tropicalis (Western clawed frog).